The sequence spans 129 residues: Putative reactive intermediate deaminase TdcF (129 aa).

Residue Lys58 is modified to N6-(pyridoxal phosphate)lysine. Residues Arg105 to Cys107 and Glu120 each bind substrate.

The protein belongs to the RutC family. As to quaternary structure, homotrimer.

Its pathway is amino-acid degradation; L-threonine degradation via propanoate pathway. In terms of biological role, may be a post-translational regulator that controls the metabolic fate of L-threonine or the potentially toxic intermediate 2-ketobutyrate. This Escherichia coli O6:H1 (strain CFT073 / ATCC 700928 / UPEC) protein is Putative reactive intermediate deaminase TdcF (tdcF).